A 161-amino-acid chain; its full sequence is Ribonuclease P protein component (161 aa).

This sequence belongs to the RnpA family. As to quaternary structure, consists of a catalytic RNA component (M1 or rnpB) and a protein subunit.

It carries out the reaction Endonucleolytic cleavage of RNA, removing 5'-extranucleotides from tRNA precursor.. Functionally, RNaseP catalyzes the removal of the 5'-leader sequence from pre-tRNA to produce the mature 5'-terminus. It can also cleave other RNA substrates such as 4.5S RNA. The protein component plays an auxiliary but essential role in vivo by binding to the 5'-leader sequence and broadening the substrate specificity of the ribozyme. This Helicobacter pylori (strain J99 / ATCC 700824) (Campylobacter pylori J99) protein is Ribonuclease P protein component.